The chain runs to 611 residues: U-box domain-containing protein 12 (611 aa).

Positions 227-301 (IIPDEFRCPI…SQWCEANGIE (75 aa)) constitute a U-box domain. 4 ARM repeats span residues 355 to 394 (VNNR…NLSI), 396 to 435 (ENNK…SLSV), 437 to 476 (DENK…NLCI), and 478 to 517 (QGNK…ILAG).

It carries out the reaction S-ubiquitinyl-[E2 ubiquitin-conjugating enzyme]-L-cysteine + [acceptor protein]-L-lysine = [E2 ubiquitin-conjugating enzyme]-L-cysteine + N(6)-ubiquitinyl-[acceptor protein]-L-lysine.. It participates in protein modification; protein ubiquitination. Functionally, possesses E3 ubiquitin-protein ligase in vitro. The chain is U-box domain-containing protein 12 (PUB12) from Oryza sativa subsp. japonica (Rice).